A 328-amino-acid polypeptide reads, in one-letter code: GTP cyclohydrolase MptA (328 aa).

It belongs to the GTP cyclohydrolase IV family. Homodimer. It depends on Fe(2+) as a cofactor.

The enzyme catalyses GTP + H2O = 7,8-dihydroneopterin 2',3'-cyclic phosphate + formate + diphosphate + H(+). It functions in the pathway cofactor biosynthesis; 5,6,7,8-tetrahydromethanopterin biosynthesis. In terms of biological role, converts GTP to 7,8-dihydro-D-neopterin 2',3'-cyclic phosphate, the first intermediate in the biosynthesis of coenzyme methanopterin. In Methanospirillum hungatei JF-1 (strain ATCC 27890 / DSM 864 / NBRC 100397 / JF-1), this protein is GTP cyclohydrolase MptA.